Reading from the N-terminus, the 161-residue chain is Transcription antitermination protein NusB (161 aa).

Positions 1–22 (MNLSDFKPGEGTEVPEEEKSVS) are disordered.

It belongs to the NusB family.

Functionally, involved in transcription antitermination. Required for transcription of ribosomal RNA (rRNA) genes. Binds specifically to the boxA antiterminator sequence of the ribosomal RNA (rrn) operons. The chain is Transcription antitermination protein NusB from Hydrogenovibrio crunogenus (strain DSM 25203 / XCL-2) (Thiomicrospira crunogena).